The chain runs to 47 residues: Thionin (47 aa).

Cystine bridges form between Cys3/Cys41, Cys4/Cys33, Cys12/Cys31, and Cys16/Cys27.

Belongs to the plant thionin (TC 1.C.44) family. 4 C-C subfamily.

It localises to the secreted. Thionins are small plant proteins which are toxic to animal cells. They seem to exert their toxic effect at the level of the cell membrane. Their precise function is not known. This Pyrularia pubera (Buffalo nut) protein is Thionin (THI1).